Reading from the N-terminus, the 372-residue chain is Heat-inducible transcription repressor HrcA (372 aa).

The segment at 300–334 (YGRSGAAGEPAGNDPVGEPETESETESQTNDTEPI) is disordered.

Belongs to the HrcA family.

Functionally, negative regulator of class I heat shock genes (grpE-dnaK-dnaJ and groELS operons). Prevents heat-shock induction of these operons. The polypeptide is Heat-inducible transcription repressor HrcA (Bifidobacterium longum (strain NCC 2705)).